We begin with the raw amino-acid sequence, 227 residues long: Extracellular small neutral protease (227 aa).

The signal sequence occupies residues 1-29 (MRITLPLLSTAVGLGLTAAVLGTGPAATA). The propeptide occupies 30–42 (AAPQEPVRAAQLG). 2 residues coordinate Ca(2+): Asp156 and Thr158. His163 is a Zn(2+) binding site. Glu164 is a catalytic residue. Positions 167 and 173 each coordinate Zn(2+). Cysteines 179 and 192 form a disulfide.

The protein belongs to the peptidase M7 family. Requires Ca(2+) as cofactor. It depends on Zn(2+) as a cofactor. In terms of processing, the N-terminus is blocked.

The protein resides in the secreted. The catalysed reaction is Hydrolyzes proteins with a preference for Tyr or Phe in the P1' position. Has no action on amino-acid p-nitroanilides.. This is Extracellular small neutral protease (snpA) from Streptomyces lividans.